Reading from the N-terminus, the 355-residue chain is Ribosomal RNA small subunit methyltransferase H (355 aa).

S-adenosyl-L-methionine is bound by residues 55-57, D75, D122, and Q129; that span reads GGH. The segment at 327–355 is disordered; sequence ERTSQPLPATGAEDFVPAVPGAAEKGRRR.

It belongs to the methyltransferase superfamily. RsmH family.

Its subcellular location is the cytoplasm. The catalysed reaction is cytidine(1402) in 16S rRNA + S-adenosyl-L-methionine = N(4)-methylcytidine(1402) in 16S rRNA + S-adenosyl-L-homocysteine + H(+). Its function is as follows. Specifically methylates the N4 position of cytidine in position 1402 (C1402) of 16S rRNA. This Bordetella avium (strain 197N) protein is Ribosomal RNA small subunit methyltransferase H.